The sequence spans 358 residues: Glycerol-3-phosphate dehydrogenase [NAD(P)+] (358 aa).

Residues Ser33, Phe34, Arg54, and Lys128 each contribute to the NADPH site. Positions 128 and 156 each coordinate sn-glycerol 3-phosphate. Residue Ala160 coordinates NADPH. Residues Lys211, Asp264, Ser274, Arg275, and Asn276 each contribute to the sn-glycerol 3-phosphate site. Lys211 functions as the Proton acceptor in the catalytic mechanism. Residue Arg275 coordinates NADPH. Residues Val299 and Glu301 each contribute to the NADPH site.

The protein belongs to the NAD-dependent glycerol-3-phosphate dehydrogenase family.

The protein localises to the cytoplasm. It carries out the reaction sn-glycerol 3-phosphate + NAD(+) = dihydroxyacetone phosphate + NADH + H(+). The enzyme catalyses sn-glycerol 3-phosphate + NADP(+) = dihydroxyacetone phosphate + NADPH + H(+). Its pathway is membrane lipid metabolism; glycerophospholipid metabolism. Functionally, catalyzes the reduction of the glycolytic intermediate dihydroxyacetone phosphate (DHAP) to sn-glycerol 3-phosphate (G3P), the key precursor for phospholipid synthesis. The protein is Glycerol-3-phosphate dehydrogenase [NAD(P)+] of Saccharophagus degradans (strain 2-40 / ATCC 43961 / DSM 17024).